We begin with the raw amino-acid sequence, 210 residues long: Large ribosomal subunit protein uL16 (210 aa).

It belongs to the universal ribosomal protein uL16 family. As to quaternary structure, component of the large ribosomal subunit. Mature ribosomes consist of a small (40S) and a large (60S) subunit. The 40S subunit contains about 33 different proteins and 1 molecule of RNA (18S). The 60S subunit contains about 49 different proteins and 3 molecules of RNA (28S, 5.8S and 5S).

The protein resides in the cytoplasm. Its function is as follows. Component of the large ribosomal subunit. Plays a role in the formation of actively translating ribosomes. (Microbial infection) Seems to bind to the leucine zipper of viral and cellular JUN. This is Large ribosomal subunit protein uL16 from Gallus gallus (Chicken).